Reading from the N-terminus, the 221-residue chain is Putative hemin import ATP-binding protein HrtA (221 aa).

The 219-residue stretch at 3 to 221 (LVVEDIVKNF…IELEDGKITD (219 aa)) folds into the ABC transporter domain. An ATP-binding site is contributed by 39–46 (GASGSGKT).

The protein belongs to the ABC transporter superfamily. HrtA family. As to quaternary structure, the complex is composed of two ATP-binding proteins (HrtA), two transmembrane proteins (HrtB) and a solute-binding protein.

Its subcellular location is the cell membrane. In terms of biological role, part of the ABC transporter complex hrt involved in hemin import. Responsible for energy coupling to the transport system. In Staphylococcus aureus (strain USA300), this protein is Putative hemin import ATP-binding protein HrtA (hrtA).